The sequence spans 546 residues: MSLQLLNPKAESLRRDAALKVNVTSAEGLQSVLETNLGPKGTLKMLVDGAGNIKLTKDGKVLLTEMQIQSPTAVLIARAAAAQDEITGDGTTTVVCLVGELLRQAHRFIQEGVHPRIITDGFEIARKESMKFLDEFKISKTNLSNDREFLLQVARSSLLTKVDADLTEVLTPIVTDAVLSVYDAQADNLDLHMVEIMQMQHLSPKDTTFIKGLVLDHGGRHPDMPTRVKNAYVLILNVSLEYEKTEVNSGFFYSSADQRDKLAASERKFVDAKLKKIIDLKNEVCGMDPDKGFVIINQKGIDPMSLDVFAKHNILALRRAKRRNMERLQLVTGGEAQNSVEDLSPQILGFSGLVYQETIGEEKFTYVTENTDPKSCTILIKGSTHYALAQTKDAVRDGLRAVANVLKDKNIIPGAGAFYIALSRYLRSANMNKLGAKGKTKTGIEAFAEALLVIPKTLVKNSGFDPLDVLAMVEDELDDAQDSDETRYVGVDLNIGDSCDPTIEGIWDSYRVLRNAITGATGIASNLLLCDELLRAGRSTLKETPQ.

S2 carries the post-translational modification N-acetylserine. Position 249 is a phosphoserine (S249).

The protein belongs to the TCP-1 chaperonin family. In terms of assembly, heterooligomeric complex of about 850 to 900 kDa that forms two stacked rings, 12 to 16 nm in diameter.

It is found in the cytoplasm. In terms of biological role, molecular chaperone; assists the folding of proteins upon ATP hydrolysis. Known to play a role, in vitro, in the folding of actin and tubulin. In yeast may play a role in mitotic spindle formation. The sequence is that of T-complex protein 1 subunit zeta (CCT6) from Saccharomyces cerevisiae (strain ATCC 204508 / S288c) (Baker's yeast).